Reading from the N-terminus, the 265-residue chain is Phosphatidylserine decarboxylase proenzyme (265 aa).

Catalysis depends on charge relay system; for autoendoproteolytic cleavage activity residues Asp86, His142, and Ser226. Ser226 serves as the catalytic Schiff-base intermediate with substrate; via pyruvic acid; for decarboxylase activity. Residue Ser226 is modified to Pyruvic acid (Ser); by autocatalysis.

This sequence belongs to the phosphatidylserine decarboxylase family. PSD-B subfamily. Prokaryotic type I sub-subfamily. As to quaternary structure, heterodimer of a large membrane-associated beta subunit and a small pyruvoyl-containing alpha subunit. The cofactor is pyruvate. In terms of processing, is synthesized initially as an inactive proenzyme. Formation of the active enzyme involves a self-maturation process in which the active site pyruvoyl group is generated from an internal serine residue via an autocatalytic post-translational modification. Two non-identical subunits are generated from the proenzyme in this reaction, and the pyruvate is formed at the N-terminus of the alpha chain, which is derived from the carboxyl end of the proenzyme. The autoendoproteolytic cleavage occurs by a canonical serine protease mechanism, in which the side chain hydroxyl group of the serine supplies its oxygen atom to form the C-terminus of the beta chain, while the remainder of the serine residue undergoes an oxidative deamination to produce ammonia and the pyruvoyl prosthetic group on the alpha chain. During this reaction, the Ser that is part of the protease active site of the proenzyme becomes the pyruvoyl prosthetic group, which constitutes an essential element of the active site of the mature decarboxylase.

Its subcellular location is the cell membrane. The enzyme catalyses a 1,2-diacyl-sn-glycero-3-phospho-L-serine + H(+) = a 1,2-diacyl-sn-glycero-3-phosphoethanolamine + CO2. It participates in phospholipid metabolism; phosphatidylethanolamine biosynthesis; phosphatidylethanolamine from CDP-diacylglycerol: step 2/2. Functionally, catalyzes the formation of phosphatidylethanolamine (PtdEtn) from phosphatidylserine (PtdSer). This Anoxybacillus flavithermus (strain DSM 21510 / WK1) protein is Phosphatidylserine decarboxylase proenzyme.